The chain runs to 83 residues: High-potential iron-sulfur protein (83 aa).

Positions 43, 46, 61, and 75 each coordinate [4Fe-4S] cluster.

It belongs to the high-potential iron-sulfur protein (HiPIP) family. Homodimer.

It localises to the periplasm. Its function is as follows. Specific class of high-redox-potential 4Fe-4S ferredoxins. Functions in anaerobic electron transport in most purple and in some other photosynthetic bacteria and in at least one genus (Paracoccus) of halophilic, denitrifying bacteria. The polypeptide is High-potential iron-sulfur protein (hip) (Marichromatium gracile (Chromatium gracile)).